A 216-amino-acid polypeptide reads, in one-letter code: Inorganic pyrophosphatase (216 aa).

Lys39, Arg53, and Tyr65 together coordinate substrate. Mg(2+)-binding residues include Asp93, Asp98, and Asp131. A substrate-binding site is contributed by Tyr168.

Belongs to the PPase family. Homohexamer. Mg(2+) serves as cofactor.

The protein resides in the cytoplasm. It catalyses the reaction diphosphate + H2O = 2 phosphate + H(+). Its function is as follows. Catalyzes the hydrolysis of inorganic pyrophosphate (PPi) forming two phosphate ions. In Chlamydia caviae (strain ATCC VR-813 / DSM 19441 / 03DC25 / GPIC) (Chlamydophila caviae), this protein is Inorganic pyrophosphatase.